A 922-amino-acid chain; its full sequence is Eukaryotic translation initiation factor 3 subunit C (922 aa).

Disordered regions lie at residues 1–37 (MSRFFATGSDSESESSLSGDEILPKPVGGTFGKQPII) and 154–308 (APIA…KVKG). The segment covering 8 to 21 (GSDSESESSLSGDE) has biased composition (low complexity). Positions 165-189 (ESADEDQEKDEDSEASSSSDDDSDE) are enriched in acidic residues. The span at 207–216 (SRSKFLKKEE) shows a compositional bias: basic and acidic residues. A compositionally biased stretch (acidic residues) spans 217–243 (AEDEESSSDDEDWGSDSDESDSDESDD). A compositionally biased stretch (basic and acidic residues) spans 258–275 (TVNEGDRQAAEKKKEEKA). A compositionally biased stretch (acidic residues) spans 289 to 301 (EGEEEEDDNEGGG). A PCI domain is found at 674-850 (FHMHINLELL…QTVVMHGTEP (177 aa)). The interval 885 to 922 (YFNRGDRGDRDQKDQYQRKEGGYMRRGYRRDQQGQSNY) is disordered. Basic and acidic residues predominate over residues 888–907 (RGDRGDRDQKDQYQRKEGGY).

It belongs to the eIF-3 subunit C family. Component of the eukaryotic translation initiation factor 3 (eIF-3) complex, which is composed of 13 subunits: eif3a, eif3b, eif3c, eif3d, eif3e, eif3f, eif3g, eif3h, eif3i, eif3j, eif3k, eif3l and eif3m.

Its subcellular location is the cytoplasm. Functionally, component of the eukaryotic translation initiation factor 3 (eIF-3) complex, which is involved in protein synthesis of a specialized repertoire of mRNAs and, together with other initiation factors, stimulates binding of mRNA and methionyl-tRNAi to the 40S ribosome. The eIF-3 complex specifically targets and initiates translation of a subset of mRNAs involved in cell proliferation. The sequence is that of Eukaryotic translation initiation factor 3 subunit C (eif3c) from Xenopus tropicalis (Western clawed frog).